The chain runs to 439 residues: Glutamate--tRNA ligase 2 (439 aa).

The 'HIGH' region motif lies at 6–16 (PSPTGDMHIGN). The 'KMSKS' region signature appears at 232-236 (KMSKR). Lysine 235 is an ATP binding site.

This sequence belongs to the class-I aminoacyl-tRNA synthetase family. Glutamate--tRNA ligase type 1 subfamily. As to quaternary structure, monomer.

It is found in the cytoplasm. It catalyses the reaction tRNA(Glu) + L-glutamate + ATP = L-glutamyl-tRNA(Glu) + AMP + diphosphate. Functionally, catalyzes the attachment of glutamate to tRNA(Glu) in a two-step reaction: glutamate is first activated by ATP to form Glu-AMP and then transferred to the acceptor end of tRNA(Glu). This chain is Glutamate--tRNA ligase 2, found in Helicobacter pylori (strain Shi470).